Reading from the N-terminus, the 272-residue chain is Thymidine phosphorylase (272 aa).

The protein belongs to the thymidine/pyrimidine-nucleoside phosphorylase family. Homodimer.

The catalysed reaction is thymidine + phosphate = 2-deoxy-alpha-D-ribose 1-phosphate + thymine. Functionally, the enzymes which catalyze the reversible phosphorolysis of pyrimidine nucleosides are involved in the degradation of these compounds and in their utilization as carbon and energy sources, or in the rescue of pyrimidine bases for nucleotide synthesis. This is Thymidine phosphorylase (deoA) from Metamycoplasma hominis (Mycoplasma hominis).